Reading from the N-terminus, the 416-residue chain is Imidazolonepropionase (416 aa).

Residues histidine 78 and histidine 80 each contribute to the Fe(3+) site. Residues histidine 78 and histidine 80 each contribute to the Zn(2+) site. 4-imidazolone-5-propanoate-binding residues include arginine 87, tyrosine 150, and histidine 183. Tyrosine 150 lines the N-formimidoyl-L-glutamate pocket. Residue histidine 248 participates in Fe(3+) binding. Residue histidine 248 participates in Zn(2+) binding. Glutamine 251 lines the 4-imidazolone-5-propanoate pocket. Position 323 (aspartate 323) interacts with Fe(3+). Aspartate 323 contacts Zn(2+). Residues asparagine 325 and glycine 327 each contribute to the N-formimidoyl-L-glutamate site. Position 328 (threonine 328) interacts with 4-imidazolone-5-propanoate.

The protein belongs to the metallo-dependent hydrolases superfamily. HutI family. It depends on Zn(2+) as a cofactor. Requires Fe(3+) as cofactor.

Its subcellular location is the cytoplasm. The enzyme catalyses 4-imidazolone-5-propanoate + H2O = N-formimidoyl-L-glutamate. It participates in amino-acid degradation; L-histidine degradation into L-glutamate; N-formimidoyl-L-glutamate from L-histidine: step 3/3. In terms of biological role, catalyzes the hydrolytic cleavage of the carbon-nitrogen bond in imidazolone-5-propanoate to yield N-formimidoyl-L-glutamate. It is the third step in the universal histidine degradation pathway. This chain is Imidazolonepropionase, found in Vibrio campbellii (strain ATCC BAA-1116).